The sequence spans 472 residues: 3-isopropylmalate dehydratase large subunit (472 aa).

[4Fe-4S] cluster is bound by residues Cys-346, Cys-406, and Cys-409.

Belongs to the aconitase/IPM isomerase family. LeuC type 1 subfamily. In terms of assembly, heterodimer of LeuC and LeuD. [4Fe-4S] cluster is required as a cofactor.

It catalyses the reaction (2R,3S)-3-isopropylmalate = (2S)-2-isopropylmalate. It functions in the pathway amino-acid biosynthesis; L-leucine biosynthesis; L-leucine from 3-methyl-2-oxobutanoate: step 2/4. In terms of biological role, catalyzes the isomerization between 2-isopropylmalate and 3-isopropylmalate, via the formation of 2-isopropylmaleate. The protein is 3-isopropylmalate dehydratase large subunit of Thermus thermophilus (strain ATCC BAA-163 / DSM 7039 / HB27).